Consider the following 311-residue polypeptide: Putative S-adenosyl-L-methionine-dependent methyltransferase MMAR_0358 (311 aa).

Residues Asp132 and 161-162 contribute to the S-adenosyl-L-methionine site; that span reads DL.

This sequence belongs to the UPF0677 family.

Exhibits S-adenosyl-L-methionine-dependent methyltransferase activity. In Mycobacterium marinum (strain ATCC BAA-535 / M), this protein is Putative S-adenosyl-L-methionine-dependent methyltransferase MMAR_0358.